The primary structure comprises 423 residues: Dihydroorotase (423 aa).

The Zn(2+) site is built by H60 and H62. Residues 62–64 (HFR) and N94 each bind substrate. The Zn(2+) site is built by D151, H178, and H231. Substrate is bound at residue N277. Residue D304 coordinates Zn(2+). The active site involves D304. H308 contributes to the substrate binding site.

This sequence belongs to the metallo-dependent hydrolases superfamily. DHOase family. Class I DHOase subfamily. It depends on Zn(2+) as a cofactor.

It carries out the reaction (S)-dihydroorotate + H2O = N-carbamoyl-L-aspartate + H(+). It participates in pyrimidine metabolism; UMP biosynthesis via de novo pathway; (S)-dihydroorotate from bicarbonate: step 3/3. Its function is as follows. Catalyzes the reversible cyclization of carbamoyl aspartate to dihydroorotate. The chain is Dihydroorotase from Lactococcus lactis subsp. lactis (strain IL1403) (Streptococcus lactis).